A 268-amino-acid chain; its full sequence is Phosphoethanolamine/phosphocholine phosphatase (268 aa).

Catalysis depends on D32, which acts as the Nucleophile. Mg(2+)-binding residues include D32 and D34. The active-site Proton donor is the D34. Substrate contacts are provided by D43 and D123. D203 contributes to the Mg(2+) binding site.

The protein belongs to the HAD-like hydrolase superfamily. PHOSPHO family. Mg(2+) serves as cofactor. Expressed at sites of mineralization in bone and cartilage. Highly expressed in hypertrophic chondrocytes compared to non-chondrogenic tissues. Expressed in chondrocytes but not in heart, liver, lung, kidney, spleen, muscle, adipose tissues not duodenum. In diaphyseal cortical bone, it is expressed in the osteoid layer of the periosteum, forming surfaces of growing osteons, and newly formed osteocytes, whereas it is not expressed in the endosteum and closed osteons. In growth plate cartilage, it is limited to the early hypertrophic chondrocytes and the ossification groove of Ranvier. Highly expressed on the mineralization surfaces of the cartilage remnants and trabecular bone within the primary spongiosa. Expressed in 17-day-old embryonic calvaria, the osteoid present on the intramembranous and periosteal bone surfaces but not in soft tissues examined.

It is found in the extracellular vesicle. It carries out the reaction phosphoethanolamine + H2O = ethanolamine + phosphate. It catalyses the reaction phosphocholine + H2O = choline + phosphate. Its function is as follows. Phosphatase that has a high activity toward phosphoethanolamine (PEA) and phosphocholine (PCho). Involved in the generation of inorganic phosphate for bone mineralization. This chain is Phosphoethanolamine/phosphocholine phosphatase (PHOSPHO1), found in Gallus gallus (Chicken).